Here is a 532-residue protein sequence, read N- to C-terminus: 4-amino-L-phenylalanyl-[CmlP-peptidyl-carrier-protein] 3-hydroxylase (532 aa).

Fe cation is bound by residues His-305, His-307, Asp-309, His-310, Glu-377, and Asp-403.

This sequence belongs to the metallo-beta-lactamase superfamily. In terms of assembly, homodimer. It depends on Fe(2+) as a cofactor.

It catalyses the reaction 4-amino-L-phenylalanyl-[peptidyl-carrier protein] + AH2 + O2 = (2R)-2-(4-aminophenyl)-L-seryl-[peptidyl-carrier protein] + A + H2O. Its pathway is antibiotic biosynthesis. Functionally, involved in chloramphenicol biosynthesis. Catalyzes the beta-hydroxylation of 4-amino-L-phenylalanine (L-PAPA) covalently bound to CmlP to form L-p-aminophenylserine. The chain is 4-amino-L-phenylalanyl-[CmlP-peptidyl-carrier-protein] 3-hydroxylase from Streptomyces venezuelae (strain ATCC 10712 / CBS 650.69 / DSM 40230 / JCM 4526 / NBRC 13096 / PD 04745).